We begin with the raw amino-acid sequence, 293 residues long: MNQSINFPNNLQNNSNINNALKYLTKIIPNNKYPQQNQSHNNTTPVVTNAINPIEKLNVEEITYLQKYLENIKNKKLNLNKQSNNQTNNQTNNQTNNQTNNQTNNIRPQINNNKQPISKIQTNRTNEIYDPLKREMPIDWRILPANSLNNFRNNAFDANVFEPGSRGATSTRIGKKAQFNNPYDYGSKQNSFENVFQKPCNDPYVYDNNMLNQLNINEVPNNLRPNDLRNVDVESSLLQRESVHLPGQRNISEREFNRWNMLPFDPQDHRHIVWEDNMPRGGYATRAERLDDN.

The stretch at 65–89 (LQKYLENIKNKKLNLNKQSNNQTNN) forms a coiled coil. A disordered region spans residues 81–112 (KQSNNQTNNQTNNQTNNQTNNQTNNIRPQINN).

It localises to the virion. This is an uncharacterized protein from Acanthamoeba polyphaga mimivirus (APMV).